Here is a 281-residue protein sequence, read N- to C-terminus: 2-dehydro-3-deoxyphosphooctonate aldolase (281 aa).

It belongs to the KdsA family.

The protein resides in the cytoplasm. The catalysed reaction is D-arabinose 5-phosphate + phosphoenolpyruvate + H2O = 3-deoxy-alpha-D-manno-2-octulosonate-8-phosphate + phosphate. It participates in carbohydrate biosynthesis; 3-deoxy-D-manno-octulosonate biosynthesis; 3-deoxy-D-manno-octulosonate from D-ribulose 5-phosphate: step 2/3. It functions in the pathway bacterial outer membrane biogenesis; lipopolysaccharide biosynthesis. This is 2-dehydro-3-deoxyphosphooctonate aldolase from Acidithiobacillus ferrooxidans (strain ATCC 23270 / DSM 14882 / CIP 104768 / NCIMB 8455) (Ferrobacillus ferrooxidans (strain ATCC 23270)).